The following is a 734-amino-acid chain: Photosystem I P700 chlorophyll a apoprotein A2 (734 aa).

Transmembrane regions (helical) follow at residues 46-69 (IFASHFGQLAIIFLWTSGNLFHVA), 135-158 (LYTGALFLLFLSTLSLIGGWLHLQ), 175-199 (LNHHLSGLFGVSSLAWTGHLVHVAI), 273-291 (IAHHHLAIAFIFLIAGHMY), 330-353 (IHFQLGLALASLGVITSLVAQHMY), 369-395 (AALYTHHQYIAGFIMTGAFAHGAIFFI), 417-439 (AIISHLSWASLFLGFHTLGLYVH), and 517-535 (FLVHHAIALGLHTTTLILV). Residues cysteine 559 and cysteine 568 each coordinate [4Fe-4S] cluster. 2 helical membrane-spanning segments follow: residues 575–596 (AFYLAVFWMLNTIGWVTFYWHW) and 643–665 (LSVWAWMFLFGHLVWATGFMFLI). Histidine 654, methionine 662, and tyrosine 670 together coordinate chlorophyll a. Position 671 (tryptophan 671) interacts with phylloquinone. A helical transmembrane segment spans residues 707-727 (LVGLAHFSVGYIFTYAAFLIA).

Belongs to the PsaA/PsaB family. As to quaternary structure, the PsaA/B heterodimer binds the P700 chlorophyll special pair and subsequent electron acceptors. PSI consists of a core antenna complex that captures photons, and an electron transfer chain that converts photonic excitation into a charge separation. The eukaryotic PSI reaction center is composed of at least 11 subunits. It depends on P700 is a chlorophyll a/chlorophyll a' dimer, A0 is one or more chlorophyll a, A1 is one or both phylloquinones and FX is a shared 4Fe-4S iron-sulfur center. as a cofactor.

The protein resides in the plastid. The protein localises to the chloroplast thylakoid membrane. The enzyme catalyses reduced [plastocyanin] + hnu + oxidized [2Fe-2S]-[ferredoxin] = oxidized [plastocyanin] + reduced [2Fe-2S]-[ferredoxin]. PsaA and PsaB bind P700, the primary electron donor of photosystem I (PSI), as well as the electron acceptors A0, A1 and FX. PSI is a plastocyanin-ferredoxin oxidoreductase, converting photonic excitation into a charge separation, which transfers an electron from the donor P700 chlorophyll pair to the spectroscopically characterized acceptors A0, A1, FX, FA and FB in turn. Oxidized P700 is reduced on the lumenal side of the thylakoid membrane by plastocyanin. This is Photosystem I P700 chlorophyll a apoprotein A2 from Saccharum hybrid (Sugarcane).